Here is a 427-residue protein sequence, read N- to C-terminus: Ribose-phosphate pyrophosphokinase 1 (427 aa).

Residues D128, H130, and D143 each coordinate Mg(2+). S199, S218, S271, and S295 each carry phosphoserine.

It belongs to the ribose-phosphate pyrophosphokinase family.

It is found in the cytoplasm. The catalysed reaction is D-ribose 5-phosphate + ATP = 5-phospho-alpha-D-ribose 1-diphosphate + AMP + H(+). It functions in the pathway metabolic intermediate biosynthesis; 5-phospho-alpha-D-ribose 1-diphosphate biosynthesis; 5-phospho-alpha-D-ribose 1-diphosphate from D-ribose 5-phosphate (route I): step 1/1. Functionally, 5-phosphoribose 1-diphosphate synthase involved in nucleotide, histidine, and tryptophan biosynthesis. Active in heteromultimeric complexes with other 5-phosphoribose 1-diphosphate synthases (PRS2, PRS3, PRS4 and PRS5). In Saccharomyces cerevisiae (strain ATCC 204508 / S288c) (Baker's yeast), this protein is Ribose-phosphate pyrophosphokinase 1 (PRS1).